A 102-amino-acid chain; its full sequence is Aspartyl/glutamyl-tRNA(Asn/Gln) amidotransferase subunit C (102 aa).

The protein belongs to the GatC family. Heterotrimer of A, B and C subunits.

The catalysed reaction is L-glutamyl-tRNA(Gln) + L-glutamine + ATP + H2O = L-glutaminyl-tRNA(Gln) + L-glutamate + ADP + phosphate + H(+). It carries out the reaction L-aspartyl-tRNA(Asn) + L-glutamine + ATP + H2O = L-asparaginyl-tRNA(Asn) + L-glutamate + ADP + phosphate + 2 H(+). Its function is as follows. Allows the formation of correctly charged Asn-tRNA(Asn) or Gln-tRNA(Gln) through the transamidation of misacylated Asp-tRNA(Asn) or Glu-tRNA(Gln) in organisms which lack either or both of asparaginyl-tRNA or glutaminyl-tRNA synthetases. The reaction takes place in the presence of glutamine and ATP through an activated phospho-Asp-tRNA(Asn) or phospho-Glu-tRNA(Gln). This is Aspartyl/glutamyl-tRNA(Asn/Gln) amidotransferase subunit C from Leuconostoc citreum (strain KM20).